The following is a 124-amino-acid chain: Fluoride-specific ion channel FluC (124 aa).

4 helical membrane passes run 4 to 24 (LIFV…ISIF), 35 to 55 (FGTL…YALG), 62 to 82 (PEIK…FSTF), and 102 to 122 (IALN…LVFS). Gly-74 and Thr-77 together coordinate Na(+).

Belongs to the fluoride channel Fluc/FEX (TC 1.A.43) family.

Its subcellular location is the cell inner membrane. The enzyme catalyses fluoride(in) = fluoride(out). With respect to regulation, na(+) is not transported, but it plays an essential structural role and its presence is essential for fluoride channel function. Fluoride-specific ion channel. Important for reducing fluoride concentration in the cell, thus reducing its toxicity. The protein is Fluoride-specific ion channel FluC of Shewanella loihica (strain ATCC BAA-1088 / PV-4).